The primary structure comprises 287 residues: MSYTTRQVGAKNSLDYKVYIEKDGKPISAFHDIPLYADEANGIFNMVVEIPRWTNAKLEITKEEPLNPIIQDTKKGKLRFVRNCFPHHGYIHNYGAFPQTWEDPNESHPETKAVGDNDPLDVLEIGEQVAYTGQVKQVKVLGVMALLDEGETDWKVIAIDINDPLAPKLNDIEDVEKHLPGLLRATNEWFRIYKIPDGKPENQFAFSGEAKNKKYTLDVIRECNEAWKKLISGKSADAKKIDLTNTTLSDTATYSAEAASAVPAANVLPDEPIDKSIDKWFFISGSA.

Arginine 79 provides a ligand contact to diphosphate. 3 residues coordinate Mg(2+): aspartate 116, aspartate 121, and aspartate 153.

The protein belongs to the PPase family. In terms of assembly, homodimer. Requires Mg(2+) as cofactor.

Its subcellular location is the cytoplasm. The enzyme catalyses diphosphate + H2O = 2 phosphate + H(+). The sequence is that of Inorganic pyrophosphatase (IPP1) from Kluyveromyces lactis (strain ATCC 8585 / CBS 2359 / DSM 70799 / NBRC 1267 / NRRL Y-1140 / WM37) (Yeast).